The following is a 68-amino-acid chain: Putative membrane protein insertion efficiency factor (68 aa).

Belongs to the UPF0161 family.

The protein resides in the cell inner membrane. In terms of biological role, could be involved in insertion of integral membrane proteins into the membrane. The polypeptide is Putative membrane protein insertion efficiency factor (Aquifex aeolicus (strain VF5)).